The sequence spans 92 residues: Integration host factor subunit beta (92 aa).

It belongs to the bacterial histone-like protein family. In terms of assembly, heterodimer of an alpha and a beta chain.

Its function is as follows. This protein is one of the two subunits of integration host factor, a specific DNA-binding protein that functions in genetic recombination as well as in transcriptional and translational control. The polypeptide is Integration host factor subunit beta (Vibrio cholerae serotype O1 (strain ATCC 39541 / Classical Ogawa 395 / O395)).